A 318-amino-acid polypeptide reads, in one-letter code: Aspartate carbamoyltransferase catalytic subunit (318 aa).

Carbamoyl phosphate-binding residues include Arg57 and Thr58. Lys85 serves as a coordination point for L-aspartate. Arg107, His141, and Gln144 together coordinate carbamoyl phosphate. Residues Arg174 and Arg228 each coordinate L-aspartate. Carbamoyl phosphate-binding residues include Gly269 and Pro270.

It belongs to the aspartate/ornithine carbamoyltransferase superfamily. ATCase family. In terms of assembly, heterododecamer (2C3:3R2) of six catalytic PyrB chains organized as two trimers (C3), and six regulatory PyrI chains organized as three dimers (R2).

It carries out the reaction carbamoyl phosphate + L-aspartate = N-carbamoyl-L-aspartate + phosphate + H(+). The protein operates within pyrimidine metabolism; UMP biosynthesis via de novo pathway; (S)-dihydroorotate from bicarbonate: step 2/3. Its function is as follows. Catalyzes the condensation of carbamoyl phosphate and aspartate to form carbamoyl aspartate and inorganic phosphate, the committed step in the de novo pyrimidine nucleotide biosynthesis pathway. This chain is Aspartate carbamoyltransferase catalytic subunit, found in Mycolicibacterium smegmatis (strain ATCC 700084 / mc(2)155) (Mycobacterium smegmatis).